The chain runs to 554 residues: MPLRLINFRQQRRCRQSPSVARLESIVLNRRELLLDHFQYSLFQNSSEIPMTTILINDRPMRHTHDGRADMTNFEMDLFDTRIEVPTSKNSGGDGMHSPYYDEESSKKRCCKCGNSRNRIIKPACVPISIVSLFIIALVFLPLFNEEDLASPIKLTTGCSVDCKTFLVESIPIGLPFKTNNHTAEAWINIIDNSKQYLDISVMYWNLNTSDYKSSVYGRRVYEAIIRAGKRGVKIRIAQDGASNLSDNKESAYLVQEGLAEVREINVTRLIGSGIIHTKFILSDIATLYIGSANMDWKSLSEVKEVGVVFQECPCVASDLYKIFAAYWKLGENDSVIPEKWPISYRTPFNFSSMAKLTMDGEPAEYFISSSPGPFNPKGREHDLAAIQKIMKDARKSVCISVMDYIPSTLYMKKSNRFWPEIDDSIRDAAYRGVNVRMLISHWDHSRKEMIPFLKSLQTITDGLPRYNRTEHGQVQVRIFTVPPNGKEKIPFTRVNHAKYMVTEDIAYIGTSNWSGDYFISTAGVAMVVRQPSATKRLQNVFDRDWNSEYSKDL.

The Cytoplasmic segment spans residues 1–123 (MPLRLINFRQ…GNSRNRIIKP (123 aa)). The helical; Signal-anchor for type II membrane protein transmembrane segment at 124-144 (ACVPISIVSLFIIALVFLPLF) threads the bilayer. Residues 145-554 (NEEDLASPIK…DWNSEYSKDL (410 aa)) lie on the Extracellular side of the membrane. N-linked (GlcNAc...) asparagine glycosylation is found at Asn181, Asn208, Asn244, and Asn266. Residues 272–299 (GSGIIHTKFILSDIATLYIGSANMDWKS) enclose the PLD phosphodiesterase 1 domain. Catalysis depends on residues His277, Lys279, and Asp284. N-linked (GlcNAc...) asparagine glycosylation is found at Asn333, Asn350, Asn468, and Asn513. Residues 492 to 518 (FTRVNHAKYMVTEDIAYIGTSNWSGDY) enclose the PLD phosphodiesterase 2 domain.

Belongs to the phospholipase D family.

The protein localises to the membrane. The catalysed reaction is a 1,2-diacyl-sn-glycero-3-phosphocholine + H2O = a 1,2-diacyl-sn-glycero-3-phosphate + choline + H(+). The chain is Probable phospholipase D F09G2.8 from Caenorhabditis elegans.